A 419-amino-acid chain; its full sequence is Dimethylallyltryptophan synthase 1 (419 aa).

Residues Phe81, Met82, and Glu90 each contribute to the L-tryptophan site. Phe81 is a binding site for L-tyrosine. 6 residues coordinate (2E)-geranyl diphosphate: Arg105, Lys187, Tyr189, Arg251, Lys253, and Tyr255. Residues Arg105, Lys187, Tyr189, Arg251, Lys253, and Tyr255 each coordinate dimethylallyl diphosphate. Residue Arg257 coordinates L-tryptophan. Arg257 provides a ligand contact to L-tyrosine. (2E)-geranyl diphosphate contacts are provided by Lys332 and Tyr334. Residues Lys332 and Tyr334 each contribute to the dimethylallyl diphosphate site. An L-tryptophan-binding site is contributed by Tyr389. Position 389 (Tyr389) interacts with L-tyrosine. Tyr404 is a binding site for (2E)-geranyl diphosphate.

It belongs to the tryptophan dimethylallyltransferase family.

It carries out the reaction L-tyrosine + dimethylallyl diphosphate = 4-O-dimethylallyl-L-tyrosine + diphosphate. Its function is as follows. Dimethylallyltryptophan synthase; part of the DMATS1 gene cluster that mediates the biosynthesis of a reversely N-prenylated monomeric L-tryptophan (r-N-DMAT). DMATS1 catalyzes the reverse N-prenylation of L-Trp with DMAPP to yield N-dimethylallyl-L-tryptophan. DMATS1 exhibits unusually broad substrate specificity and can utilize geranyl diphosphate (GPP) or L-Tyr as an alternative prenyl donor or acceptor, respectively. Is able to catalyze both forward and reverse prenylation, i.e., at C1 or C3 of DMAPP; and it can catalyze C-N and C-O bond-forming reactions. The main product of the cluster is the reverse-N-dimethylallyl-L-tryptophan (r-N-DMAT) produced by the dimethylallyltryptophan synthase DMATS1 and it remains unclear whether this metabolite undergoes further modifications when silent gene clusters are activated. The acetylated form of r-N-DMAT, ac-r-N-DMAT, is also produced. The roles of the cytochrome P450 monooxygenase FFUJ_09176 and the methyltransferase FFUJ_09178 have still to be elucidated. This chain is Dimethylallyltryptophan synthase 1, found in Gibberella fujikuroi (strain CBS 195.34 / IMI 58289 / NRRL A-6831) (Bakanae and foot rot disease fungus).